A 529-amino-acid polypeptide reads, in one-letter code: ADP,ATP carrier protein 1 (529 aa).

12 consecutive transmembrane segments (helical) span residues 24–44 (LKKV…YTIL), 63–83 (IPFI…LIYA), 93–113 (ALFY…PLVI), 124–144 (DFAD…IAML), 149–169 (FAAF…LMFW), 184–204 (FYAL…PAIV), 220–240 (WGVT…IIAA), 284–304 (YMLL…LVEV), 322–342 (AFMG…MLFI), 356–376 (ALVT…LVIF), 381–401 (TGLV…VGAV), and 463–483 (ISAM…VWLT). A compositionally biased stretch (low complexity) spans 509–520 (AAEKEASPAAKE). The interval 509–529 (AAEKEASPAAKEVSPAIEGVS) is disordered.

It belongs to the ADP/ATP translocase tlc family.

It localises to the cell membrane. This Chlamydia muridarum (strain MoPn / Nigg) protein is ADP,ATP carrier protein 1 (tlcA).